The primary structure comprises 465 residues: Cysteine--tRNA ligase (465 aa).

Cys27 contributes to the Zn(2+) binding site. A 'HIGH' region motif is present at residues 29–39 (PTTYNYIHIGN). Zn(2+) is bound by residues Cys207, His232, and Glu236. The short motif at 264 to 268 (KMSKS) is the 'KMSKS' region element. Lys267 is a binding site for ATP.

Belongs to the class-I aminoacyl-tRNA synthetase family. Monomer. It depends on Zn(2+) as a cofactor.

The protein localises to the cytoplasm. The enzyme catalyses tRNA(Cys) + L-cysteine + ATP = L-cysteinyl-tRNA(Cys) + AMP + diphosphate. In Carboxydothermus hydrogenoformans (strain ATCC BAA-161 / DSM 6008 / Z-2901), this protein is Cysteine--tRNA ligase.